The sequence spans 347 residues: GTP 3',8-cyclase (347 aa).

The Radical SAM core domain occupies 10 to 242 (RLNRPIGVLR…ERINARWPLE (233 aa)). Arginine 19 serves as a coordination point for GTP. Residues cysteine 26 and cysteine 30 each coordinate [4Fe-4S] cluster. An S-adenosyl-L-methionine-binding site is contributed by tyrosine 32. Cysteine 33 is a [4Fe-4S] cluster binding site. Arginine 65 is a binding site for GTP. Glycine 69 is a binding site for S-adenosyl-L-methionine. Threonine 104 serves as a coordination point for GTP. Serine 129 contacts S-adenosyl-L-methionine. Lysine 178 provides a ligand contact to GTP. An S-adenosyl-L-methionine-binding site is contributed by methionine 212. The [4Fe-4S] cluster site is built by cysteine 275 and cysteine 278. 280 to 282 (RLR) provides a ligand contact to GTP. Position 292 (cysteine 292) interacts with [4Fe-4S] cluster.

This sequence belongs to the radical SAM superfamily. MoaA family. As to quaternary structure, monomer and homodimer. Requires [4Fe-4S] cluster as cofactor.

The enzyme catalyses GTP + AH2 + S-adenosyl-L-methionine = (8S)-3',8-cyclo-7,8-dihydroguanosine 5'-triphosphate + 5'-deoxyadenosine + L-methionine + A + H(+). The protein operates within cofactor biosynthesis; molybdopterin biosynthesis. Its function is as follows. Catalyzes the cyclization of GTP to (8S)-3',8-cyclo-7,8-dihydroguanosine 5'-triphosphate. The polypeptide is GTP 3',8-cyclase (Synechococcus sp. (strain CC9605)).